We begin with the raw amino-acid sequence, 261 residues long: Cyclin-J18-like (261 aa).

This sequence belongs to the cyclin family.

In Oryza sativa subsp. japonica (Rice), this protein is Cyclin-J18-like.